A 665-amino-acid polypeptide reads, in one-letter code: SH3 domain-containing kinase-binding protein 1 (665 aa).

SH3 domains are found at residues 1–58 (MVEA…EIKK) and 98–157 (RRRR…ELSG). Residues serine 156, serine 159, serine 183, and serine 230 each carry the phosphoserine modification. Residues 159–200 (SDELGISQDEQLSKSSLRETTGSESDGGDSSSTKSEGANGTV) are disordered. Residues 177 to 195 (ETTGSESDGGDSSSTKSEG) show a composition bias toward low complexity. At threonine 254 the chain carries Phosphothreonine. Positions 267 to 328 (KSKDYCKVIF…PDNFVKLLPP (62 aa)) constitute an SH3 3 domain. Disordered regions lie at residues 328–444 (PDFE…LAGS) and 467–610 (DSVV…AAVE). The segment covering 355–390 (TERKHEIKKIPPERPEMLPNRTEEKERPEREPKLDL) has biased composition (basic and acidic residues). Serine 436 carries the phosphoserine modification. Over residues 469–484 (VVSSTEKLSHPTTSRP) the composition is skewed to polar residues. Low complexity predominate over residues 491–510 (PPSQSLTSSSLSSPDIFDSP). Serine 509, serine 511, and serine 521 each carry phosphoserine. Residues 517-531 (EEHISLAHRGVDASK) show a composition bias toward basic and acidic residues. Polar residues predominate over residues 535 to 546 (KTVTISQVSDNK). The segment covering 564 to 582 (APLSSAAPSPLSSSLGTAG) has biased composition (low complexity). Serine 587 is subject to Phosphoserine. Residues 602-664 (AASSQAAVEE…VNDIKKALQS (63 aa)) adopt a coiled-coil conformation.

Can self-associate and form homotetramers. Interacts with CD2, F-actin capping protein, PIK3R3, GRB2, EGFR, MET, BLNK, MAP3K4, PDCD6IP, SPRY2, ARHGAP17, ARHGAP27, MAGI2, CRK, BCAR1, SOS1, ASAP1, ARAP3, HIP1R, SYNJ2, INPP5D and STAP1. Interacts with E3 ubiquitin-protein ligases CBL and CBLB, but does not interact with CBLC. Two molecules of SH3KBP1 seem to bind through their respective SH3 1 domain to one molecule of CBLB. The interaction with CBL or CBLB and EGFR is increased upon EGF stimulation. The interaction with CBL is attenuated by PDCD6IP. Interacts (via SH3 domains) with ARAP1. The interaction is independent of EGF and does not affect ARAP1 GTPase-activating activity but is involved in regulating ubiquitination and endocytic trafficking of EGFR. ARAP1 competes with CBL for binding to SH3KBP1 and prevents interaction of CBL with SH3KBP1; this is likely to regulate SH3KBP1-mediated internalization of EGFR. Interacts through its proline-rich region with the SH3 domain of endophilins SH3GL1, SH3GL2 and SH3GL3. The SH3KBP1-endophilin complex seems to associate with a complex containing the phosphorylated receptor (EGFR or MET) and phosphorylated CBL. Probably associates with ASAP1 and phosphorylated EGFR. Probably part of a complex consisting of at least SH3KBP1, ASAP1 and ARAP3. Interacts with focal adhesion kinases PTK2/FAK1 and PTK2B/PYK2, probably as a dimer. Interacts with DAB2 and probably associates with chathrin through its interaction with DAB2. Part of a complex consisting of SH3KBP1, DAB2, and clathrin heavy chain. DAB2 and clathrin dissociate from SH3KBP1 following growth factor treatment, enabling interaction with CBL. Interacts with DDN and probably associates with MAGI2 through its interaction with DDN. Interacts with the SH3 domains of SRC tyrosine-protein kinases SRC, LCK, LYN, FGR, FYN and HCK. Interacts with TRADD, BIRC2, TRAF1, TRAF2 and TNFR1, and the association with a TNFR1-associated complex upon stimulation with TNF-alpha seems to be mediated by SRC. Interacts (via SH3 domains) with SHKBP1 (via PXXXPR motifs). Interaction with CBL is abolished in the presence of SHKBP1. Interacts (via SH3 domains) with ZFP36 (via extreme C-terminal region). Interacts with MAP3K4; this interaction enhances the association with ZFP36. As to quaternary structure, (Microbial infection) Interacts (via SH3 domains) with Chikungunya virus non-structural protein 3 (via C-terminus); this interaction plays a role in initiation of viral replication. In terms of processing, monoubiquitinated by CBL and CBLB after EGF stimulation; probably on its C-terminus. As to expression, ubiquitously expressed. Also expressed in some cancer cell lines.

The protein resides in the cytoplasm. Its subcellular location is the cytoskeleton. It is found in the cytoplasmic vesicle membrane. The protein localises to the synapse. It localises to the synaptosome. The protein resides in the cell junction. Its subcellular location is the focal adhesion. In terms of biological role, adapter protein involved in regulating diverse signal transduction pathways. Involved in the regulation of endocytosis and lysosomal degradation of ligand-induced receptor tyrosine kinases, including EGFR and MET/hepatocyte growth factor receptor, through an association with CBL and endophilins. The association with CBL, and thus the receptor internalization, may be inhibited by an interaction with PDCD6IP and/or SPRY2. Involved in regulation of ligand-dependent endocytosis of the IgE receptor. Attenuates phosphatidylinositol 3-kinase activity by interaction with its regulatory subunit. May be involved in regulation of cell adhesion; promotes the interaction between TTK2B and PDCD6IP. May be involved in the regulation of cellular stress response via the MAPK pathways through its interaction with MAP3K4. Is involved in modulation of tumor necrosis factor mediated apoptosis. Plays a role in the regulation of cell morphology and cytoskeletal organization. Required in the control of cell shape and migration. Has an essential role in the stimulation of B cell activation. The polypeptide is SH3 domain-containing kinase-binding protein 1 (SH3KBP1) (Homo sapiens (Human)).